A 114-amino-acid chain; its full sequence is Small ribosomal subunit protein bS16 (114 aa).

The tract at residues 87-114 is disordered; sequence AFREQPVQSAPKKKAQERAAERAKAAEA. Positions 100-114 are enriched in basic and acidic residues; it reads KAQERAAERAKAAEA.

The protein belongs to the bacterial ribosomal protein bS16 family.

This Acidiphilium cryptum (strain JF-5) protein is Small ribosomal subunit protein bS16.